Reading from the N-terminus, the 129-residue chain is Follitropin subunit beta (129 aa).

The first 18 residues, 1-18 (MKSIQFCFFFCCWKAICC), serve as a signal peptide directing secretion. Disulfide bonds link Cys21/Cys69, Cys35/Cys84, Cys38/Cys122, Cys46/Cys100, Cys50/Cys102, and Cys105/Cys112. N-linked (GlcNAc...) asparagine glycosylation is found at Asn25 and Asn42.

This sequence belongs to the glycoprotein hormones subunit beta family. Heterodimer. The active follitropin is a heterodimer composed of an alpha chain/CGA shared with other hormones and a unique beta chain/FSHB shown here.

It is found in the secreted. Its function is as follows. Together with the alpha chain CGA constitutes follitropin, the follicle-stimulating hormone, and provides its biological specificity to the hormone heterodimer. Binds FSHR, a G protein-coupled receptor, on target cells to activate downstream signaling pathways. Follitropin is involved in follicle development and spermatogenesis in reproductive organs. This is Follitropin subunit beta (FSHB) from Cavia porcellus (Guinea pig).